The sequence spans 220 residues: MKQKGFSRKSSLLKEIDFYLVTDSGLSMKGTLSDVRDAVESGCRIVQYREKDKSTKEMVEEASEIKRICSGRAIFLVNDRIDVALAVDADGVHIGQDDMPVETARKLLGEDKIIGLSVNDREEAVLAEKLGADYVGLGPIFDTATKKDAGEGIGPLKIREVKDAIKLPVVAIGGINKENCESVIQNGADSLVAISAVVCSNDVKREAKYFIDMIRRTRKA.

4-amino-2-methyl-5-(diphosphooxymethyl)pyrimidine contacts are provided by residues 47-51 (QYREK) and Asn-78. Asp-79 and Asp-98 together coordinate Mg(2+). Ser-117 contacts 4-amino-2-methyl-5-(diphosphooxymethyl)pyrimidine. 143-145 (TAT) serves as a coordination point for 2-[(2R,5Z)-2-carboxy-4-methylthiazol-5(2H)-ylidene]ethyl phosphate. Lys-146 is a 4-amino-2-methyl-5-(diphosphooxymethyl)pyrimidine binding site. 2-[(2R,5Z)-2-carboxy-4-methylthiazol-5(2H)-ylidene]ethyl phosphate is bound by residues Gly-174 and 194–195 (IS).

It belongs to the thiamine-phosphate synthase family. The cofactor is Mg(2+).

The enzyme catalyses 2-[(2R,5Z)-2-carboxy-4-methylthiazol-5(2H)-ylidene]ethyl phosphate + 4-amino-2-methyl-5-(diphosphooxymethyl)pyrimidine + 2 H(+) = thiamine phosphate + CO2 + diphosphate. It catalyses the reaction 2-(2-carboxy-4-methylthiazol-5-yl)ethyl phosphate + 4-amino-2-methyl-5-(diphosphooxymethyl)pyrimidine + 2 H(+) = thiamine phosphate + CO2 + diphosphate. The catalysed reaction is 4-methyl-5-(2-phosphooxyethyl)-thiazole + 4-amino-2-methyl-5-(diphosphooxymethyl)pyrimidine + H(+) = thiamine phosphate + diphosphate. Its pathway is cofactor biosynthesis; thiamine diphosphate biosynthesis; thiamine phosphate from 4-amino-2-methyl-5-diphosphomethylpyrimidine and 4-methyl-5-(2-phosphoethyl)-thiazole: step 1/1. In terms of biological role, condenses 4-methyl-5-(beta-hydroxyethyl)thiazole monophosphate (THZ-P) and 2-methyl-4-amino-5-hydroxymethyl pyrimidine pyrophosphate (HMP-PP) to form thiamine monophosphate (TMP). This is Thiamine-phosphate synthase from Methanosarcina barkeri (strain Fusaro / DSM 804).